The primary structure comprises 273 residues: MPEMPEVENVRATLQELVPGKKIDQVIVRVPKMIVATPPDEFVHMLVGQEIEAVRRRGKFLLFDLTNCTILSHLRMEGKFRLMDENEEVTKHTHIIFHFEDHTELRFLDVRKFGTMEVTNKYGESETKSIKKLGPEPLTPAFTLADFATGVKKTSRAIKTALLDQKLVAGVGNIYADEICFEAKVHPERAANSLSDKEINRIFEATKSIMTEAVALGGSTVRTYVNSQGKLGQYQDKLKVYGKTGEPCVICGTPIEKIKLNGRGTHFCPHCQK.

Proline 2 (schiff-base intermediate with DNA) is an active-site residue. The active-site Proton donor is the glutamate 3. Lysine 59 acts as the Proton donor; for beta-elimination activity in catalysis. DNA-binding residues include histidine 92 and arginine 111. The segment at 239–273 adopts an FPG-type zinc-finger fold; that stretch reads KVYGKTGEPCVICGTPIEKIKLNGRGTHFCPHCQK. The Proton donor; for delta-elimination activity role is filled by arginine 263.

This sequence belongs to the FPG family. Monomer. It depends on Zn(2+) as a cofactor.

It catalyses the reaction Hydrolysis of DNA containing ring-opened 7-methylguanine residues, releasing 2,6-diamino-4-hydroxy-5-(N-methyl)formamidopyrimidine.. The enzyme catalyses 2'-deoxyribonucleotide-(2'-deoxyribose 5'-phosphate)-2'-deoxyribonucleotide-DNA = a 3'-end 2'-deoxyribonucleotide-(2,3-dehydro-2,3-deoxyribose 5'-phosphate)-DNA + a 5'-end 5'-phospho-2'-deoxyribonucleoside-DNA + H(+). In terms of biological role, involved in base excision repair of DNA damaged by oxidation or by mutagenic agents. Acts as a DNA glycosylase that recognizes and removes damaged bases. Has a preference for oxidized purines, such as 7,8-dihydro-8-oxoguanine (8-oxoG). Has AP (apurinic/apyrimidinic) lyase activity and introduces nicks in the DNA strand. Cleaves the DNA backbone by beta-delta elimination to generate a single-strand break at the site of the removed base with both 3'- and 5'-phosphates. The protein is Formamidopyrimidine-DNA glycosylase of Listeria innocua serovar 6a (strain ATCC BAA-680 / CLIP 11262).